A 510-amino-acid chain; its full sequence is Lysine-specific demethylase 4D (510 aa).

Residues 15 to 57 (IMIFRPTKEEFNDFDKYIAYMESQGAHRAGLAKVIPPKEWRAR) form the JmjN domain. Residues Glu-23 and Glu-24 each carry the polyADP-ribosyl glutamic acid modification. Residue Tyr-133 coordinates 2-oxoglutarate. Residues 143–309 (DGKTQQWNVG…YGKVASQCSC (167 aa)) enclose the JmjC domain. Fe cation-binding residues include His-189 and Glu-191. Residues Asn-199 and Lys-207 each contribute to the 2-oxoglutarate site. 2 residues coordinate Zn(2+): Cys-235 and His-241. Lys-242 is a binding site for 2-oxoglutarate. Residue His-277 participates in Fe cation binding. Zn(2+)-binding residues include Cys-307 and Cys-309. Residues 397–510 (MCHTSRQAAD…ASEGGLTSDP (114 aa)) form a disordered region. Over residues 461–471 (RLPEGRDDRSP) the composition is skewed to basic and acidic residues.

It belongs to the JHDM3 histone demethylase family. Requires Fe(2+) as cofactor. Post-translationally, ubiquitinated via 'Lys-63'-linked ubiquitin chains. Deubiquitinated by USP14 with the help of TRIM14 leading to stabilization.

The protein localises to the nucleus. It catalyses the reaction N(6),N(6),N(6)-trimethyl-L-lysyl(9)-[histone H3] + 2 2-oxoglutarate + 2 O2 = N(6)-methyl-L-lysyl(9)-[histone H3] + 2 formaldehyde + 2 succinate + 2 CO2. Functionally, histone demethylase that specifically demethylates 'Lys-9' of histone H3, thereby playing a central role in histone code. Does not demethylate histone H3 'Lys-4', H3 'Lys-27', H3 'Lys-36' nor H4 'Lys-20'. Demethylates both di- and trimethylated H3 'Lys-9' residue, while it has no activity on monomethylated residues. Demethylation of Lys residue generates formaldehyde and succinate. This chain is Lysine-specific demethylase 4D (Kdm4d), found in Rattus norvegicus (Rat).